Here is a 94-residue protein sequence, read N- to C-terminus: Small ribosomal subunit protein uS19 (94 aa).

It belongs to the universal ribosomal protein uS19 family.

In terms of biological role, protein S19 forms a complex with S13 that binds strongly to the 16S ribosomal RNA. This is Small ribosomal subunit protein uS19 from Wolbachia pipientis subsp. Culex pipiens (strain wPip).